The sequence spans 132 residues: Histone H2A-alpha (132 aa).

An N-acetylserine modification is found at Ser2. Lys5 and Lys9 each carry N6-acetyllysine. Residue Gln106 is modified to N5-methylglutamine. Ser129 is modified (phosphoserine). Residues 129-130 (SQ) carry the [ST]-Q motif motif.

It belongs to the histone H2A family. In terms of assembly, the nucleosome is a histone octamer containing two molecules each of H2A, H2B, H3 and H4 assembled in one H3-H4 heterotetramer and two H2A-H2B heterodimers. The octamer wraps approximately 147 bp of DNA. Interacts with mdb1 (via BRCT domain) in vitro; this interaction requires phosphorylation of this protein at the S/T-Q motif. Phosphorylated to form H2AS128ph (gamma-H2A) in response to DNA double-strand breaks (DSBs) generated by exogenous genotoxic agents and by stalled replication forks. Phosphorylation is dependent on the DNA damage checkpoint kinases rad3/ATR and tel1/ATM, spreads on either side of a detected DSB site and may mark the surrounding chromatin for recruitment of proteins required for DNA damage signaling and repair. Gamma-H2A is required for recruiting crb2, a modulator of DNA damage checkpoint signaling, to DSB sites. Gamma-H2A is removed from the DNA prior to the strand invasion-primer extension step of the repair process and subsequently dephosphorylated. Dephosphorylation is necessary for efficient recovery from the DNA damage checkpoint. Post-translationally, acetylated by esa1 to form H2AK4ac and H2AK7ac.

It is found in the nucleus. The protein resides in the chromosome. Functionally, core component of nucleosome which plays a central role in DNA double strand break (DSB) repair. Nucleosomes wrap and compact DNA into chromatin, limiting DNA accessibility to the cellular machineries which require DNA as a template. Histones thereby play a central role in transcription regulation, DNA repair, DNA replication and chromosomal stability. DNA accessibility is regulated via a complex set of post-translational modifications of histones, also called histone code, and nucleosome remodeling. The protein is Histone H2A-alpha (hta1) of Schizosaccharomyces pombe (strain 972 / ATCC 24843) (Fission yeast).